A 185-amino-acid chain; its full sequence is Elongation factor P (185 aa).

Belongs to the elongation factor P family.

The protein resides in the cytoplasm. The protein operates within protein biosynthesis; polypeptide chain elongation. Functionally, involved in peptide bond synthesis. Stimulates efficient translation and peptide-bond synthesis on native or reconstituted 70S ribosomes in vitro. Probably functions indirectly by altering the affinity of the ribosome for aminoacyl-tRNA, thus increasing their reactivity as acceptors for peptidyl transferase. In Aromatoleum aromaticum (strain DSM 19018 / LMG 30748 / EbN1) (Azoarcus sp. (strain EbN1)), this protein is Elongation factor P.